A 153-amino-acid polypeptide reads, in one-letter code: ATP synthase subunit b' (153 aa).

Residues 23 to 40 form a helical membrane-spanning segment; that stretch reads LMAIQVVALTYILNSLFF.

Belongs to the ATPase B chain family. In terms of assembly, F-type ATPases have 2 components, F(1) - the catalytic core - and F(0) - the membrane proton channel. F(1) has five subunits: alpha(3), beta(3), gamma(1), delta(1), epsilon(1). F(0) has four main subunits: a(1), b(1), b'(1) and c(10-14). The alpha and beta chains form an alternating ring which encloses part of the gamma chain. F(1) is attached to F(0) by a central stalk formed by the gamma and epsilon chains, while a peripheral stalk is formed by the delta, b and b' chains.

The protein resides in the cellular thylakoid membrane. F(1)F(0) ATP synthase produces ATP from ADP in the presence of a proton or sodium gradient. F-type ATPases consist of two structural domains, F(1) containing the extramembraneous catalytic core and F(0) containing the membrane proton channel, linked together by a central stalk and a peripheral stalk. During catalysis, ATP synthesis in the catalytic domain of F(1) is coupled via a rotary mechanism of the central stalk subunits to proton translocation. Its function is as follows. Component of the F(0) channel, it forms part of the peripheral stalk, linking F(1) to F(0). The b'-subunit is a diverged and duplicated form of b found in plants and photosynthetic bacteria. This is ATP synthase subunit b' from Prochlorococcus marinus (strain MIT 9312).